Reading from the N-terminus, the 603-residue chain is Elongation factor 4 (603 aa).

The region spanning 7–189 is the tr-type G domain; sequence VRIRNFCIIA…AVVERIPPPP (183 aa). Residues 19–24 and 136–139 contribute to the GTP site; these read DHGKST and NKID.

It belongs to the TRAFAC class translation factor GTPase superfamily. Classic translation factor GTPase family. LepA subfamily.

It is found in the cell inner membrane. The catalysed reaction is GTP + H2O = GDP + phosphate + H(+). Functionally, required for accurate and efficient protein synthesis under certain stress conditions. May act as a fidelity factor of the translation reaction, by catalyzing a one-codon backward translocation of tRNAs on improperly translocated ribosomes. Back-translocation proceeds from a post-translocation (POST) complex to a pre-translocation (PRE) complex, thus giving elongation factor G a second chance to translocate the tRNAs correctly. Binds to ribosomes in a GTP-dependent manner. This chain is Elongation factor 4, found in Trichormus variabilis (strain ATCC 29413 / PCC 7937) (Anabaena variabilis).